Consider the following 642-residue polypeptide: Threonine--tRNA ligase (642 aa).

The TGS domain occupies 1–61 (MPVITLPDGS…DADATVAIIT (61 aa)). Residues 243–534 (DHRKIGKQLD…LTEEFAGFFP (292 aa)) form a catalytic region. Residues Cys-334, His-385, and His-511 each coordinate Zn(2+).

Belongs to the class-II aminoacyl-tRNA synthetase family. Homodimer. Zn(2+) serves as cofactor.

The protein localises to the cytoplasm. The enzyme catalyses tRNA(Thr) + L-threonine + ATP = L-threonyl-tRNA(Thr) + AMP + diphosphate + H(+). Catalyzes the attachment of threonine to tRNA(Thr) in a two-step reaction: L-threonine is first activated by ATP to form Thr-AMP and then transferred to the acceptor end of tRNA(Thr). Also edits incorrectly charged L-seryl-tRNA(Thr). In Edwardsiella ictaluri (strain 93-146), this protein is Threonine--tRNA ligase.